A 312-amino-acid chain; its full sequence is DNA-directed RNA polymerase subunit alpha (312 aa).

Residues 1 to 229 are alpha N-terminal domain (alpha-NTD); it reads MLQYQIDRIE…ELFQPLATVT (229 aa). The tract at residues 239–312 is alpha C-terminal domain (alpha-CTD); it reads EPTAEAQIPL…IQIPQSRTSA (74 aa).

Belongs to the RNA polymerase alpha chain family. As to quaternary structure, in cyanobacteria the RNAP catalytic core is composed of 2 alpha, 1 beta, 1 beta', 1 gamma and 1 omega subunit. When a sigma factor is associated with the core the holoenzyme is formed, which can initiate transcription.

It carries out the reaction RNA(n) + a ribonucleoside 5'-triphosphate = RNA(n+1) + diphosphate. Its function is as follows. DNA-dependent RNA polymerase catalyzes the transcription of DNA into RNA using the four ribonucleoside triphosphates as substrates. This chain is DNA-directed RNA polymerase subunit alpha, found in Synechococcus sp. (strain WH7803).